The following is a 215-amino-acid chain: UPF0441 protein SG0265 (215 aa).

This sequence belongs to the UPF0441 family.

The polypeptide is UPF0441 protein SG0265 (Sodalis glossinidius (strain morsitans)).